The sequence spans 395 residues: Pesticidal crystal protein Cry6Ba (395 aa).

Belongs to the cry6A endotoxin family.

Its function is as follows. Endotoxin with nematicidal activity. In Bacillus thuringiensis, this protein is Pesticidal crystal protein Cry6Ba (cry6Ba).